The sequence spans 493 residues: Cysteine--tRNA ligase (493 aa).

Cys-29 is a binding site for Zn(2+). The 'HIGH' region motif lies at 31 to 41; that stretch reads ATVQSEPHIGH. Residues Cys-214, His-239, and Glu-243 each contribute to the Zn(2+) site. A 'KMSKS' region motif is present at residues 270–274; the sequence is KMSKS. Lys-273 provides a ligand contact to ATP.

It belongs to the class-I aminoacyl-tRNA synthetase family. As to quaternary structure, monomer. The cofactor is Zn(2+).

Its subcellular location is the cytoplasm. The enzyme catalyses tRNA(Cys) + L-cysteine + ATP = L-cysteinyl-tRNA(Cys) + AMP + diphosphate. The polypeptide is Cysteine--tRNA ligase (Renibacterium salmoninarum (strain ATCC 33209 / DSM 20767 / JCM 11484 / NBRC 15589 / NCIMB 2235)).